The following is a 2014-amino-acid chain: AP-1 accessory protein LAA1 (2014 aa).

As to quaternary structure, interacts with the clathrin-associated adapter complex AP-1. Interacts directly with LAA2.

Its subcellular location is the golgi apparatus. The protein localises to the cytoplasmic vesicle. The protein resides in the clathrin-coated vesicle. Its function is as follows. Involved in localization of clathrin adapter protein complex-1 (AP-1) and subsequent AP-1-mediated clathrin-coated vesicle cargo loading. In complex with LAA2, cooperates with the small GTPase ARF1 and the phosphatidyl-inositol-4-phosphate (PI4P) synthesis to confer temporal specificity to AP-1 recruitment. The chain is AP-1 accessory protein LAA1 from Saccharomyces cerevisiae (strain ATCC 204508 / S288c) (Baker's yeast).